We begin with the raw amino-acid sequence, 109 residues long: U4-lycotoxin-Ls1b (109 aa).

The signal sequence occupies residues 1 to 22 (MKVLVLFSVLFLTLFSYSSTEA). The propeptide occupies 23–44 (IDEFDSDAEDDMLSLMANEQVR). Residues 45 to 88 (AKACTPRLHDCSHDRHSCCRGELSKDVCYCFYPEGEDKTEVCSC) are knottin domain. Disulfide bonds link Cys-48/Cys-63, Cys-55/Cys-72, Cys-62/Cys-88, and Cys-74/Cys-86. The linear cationic cytotoxin domain stretch occupies residues 89-108 (QQPKSHKYIEKVVDKAKTVV).

This sequence belongs to the neurotoxin 19 (CSTX) family. 05 (U4-Lctx) subfamily. As to expression, expressed by the venom gland.

The protein resides in the secreted. Functionally, enhances the high-affinity desensitization of human P2RX3 purinoceptors. The chain is U4-lycotoxin-Ls1b from Lycosa singoriensis (Wolf spider).